An 85-amino-acid polypeptide reads, in one-letter code: Large ribosomal subunit protein bL27 (85 aa).

A disordered region spans residues 1–20 (MAHKKGASSSRNGRDSNAQR). A compositionally biased stretch (polar residues) spans 7–19 (ASSSRNGRDSNAQ).

The protein belongs to the bacterial ribosomal protein bL27 family.

This chain is Large ribosomal subunit protein bL27, found in Kineococcus radiotolerans (strain ATCC BAA-149 / DSM 14245 / SRS30216).